A 264-amino-acid polypeptide reads, in one-letter code: Large ribosomal subunit protein uL2 (264 aa).

This sequence belongs to the universal ribosomal protein uL2 family.

The protein localises to the cytoplasm. In Tetrahymena thermophila (strain SB210), this protein is Large ribosomal subunit protein uL2 (RPL8).